The chain runs to 194 residues: MTAVQLIVGLGNPGPEYDQTRHNAGALFVERLAHAQGISLVAERKYFGLVGKFSHQGKDVRLLIPTTYMNRSGQSVAALAGFFRIPPDAILVAHDELDMPPGVAKLKTGGGHGGHNGLRDIIAQLGNQNSFHRLRLGIGHPGHSSLVSGYVLGRAPRSEQELLDTSIDFALGVLPEMLAGDWTRAMQKLHSQKA.

Y17 provides a ligand contact to tRNA. Residue H22 is the Proton acceptor of the active site. TRNA is bound by residues Y68, N70, and N116.

Belongs to the PTH family. Monomer.

The protein localises to the cytoplasm. The enzyme catalyses an N-acyl-L-alpha-aminoacyl-tRNA + H2O = an N-acyl-L-amino acid + a tRNA + H(+). Hydrolyzes ribosome-free peptidyl-tRNAs (with 1 or more amino acids incorporated), which drop off the ribosome during protein synthesis, or as a result of ribosome stalling. Its function is as follows. Catalyzes the release of premature peptidyl moieties from peptidyl-tRNA molecules trapped in stalled 50S ribosomal subunits, and thus maintains levels of free tRNAs and 50S ribosomes. This chain is Peptidyl-tRNA hydrolase, found in Pseudomonas paraeruginosa (strain DSM 24068 / PA7) (Pseudomonas aeruginosa (strain PA7)).